A 314-amino-acid chain; its full sequence is L-lactate dehydrogenase (314 aa).

Residues Val-17, Asp-38, Lys-43, Tyr-69, and 83 to 84 each bind NAD(+); that span reads GA. The substrate site is built by Gln-86 and Arg-92. NAD(+) contacts are provided by residues Ser-105, 122–124, and Ser-147; that span reads ASN. 124–127 lines the substrate pocket; sequence NPVD. 152 to 155 contributes to the substrate binding site; sequence DSAR. The beta-D-fructose 1,6-bisphosphate site is built by Arg-157 and His-172. His-179 acts as the Proton acceptor in catalysis. Tyr-223 carries the post-translational modification Phosphotyrosine. Substrate is bound at residue Thr-232.

Belongs to the LDH/MDH superfamily. LDH family. As to quaternary structure, homotetramer.

It localises to the cytoplasm. It carries out the reaction (S)-lactate + NAD(+) = pyruvate + NADH + H(+). The protein operates within fermentation; pyruvate fermentation to lactate; (S)-lactate from pyruvate: step 1/1. Allosterically activated by fructose 1,6-bisphosphate (FBP). Its function is as follows. Catalyzes the conversion of lactate to pyruvate. The sequence is that of L-lactate dehydrogenase from Corynebacterium glutamicum (strain R).